The following is a 196-amino-acid chain: Peptidyl-tRNA hydrolase (196 aa).

Tyr-18 provides a ligand contact to tRNA. His-23 serves as the catalytic Proton acceptor. TRNA contacts are provided by Phe-69, Asn-71, and Asn-117.

The protein belongs to the PTH family. Monomer.

The protein localises to the cytoplasm. The enzyme catalyses an N-acyl-L-alpha-aminoacyl-tRNA + H2O = an N-acyl-L-amino acid + a tRNA + H(+). In terms of biological role, hydrolyzes ribosome-free peptidyl-tRNAs (with 1 or more amino acids incorporated), which drop off the ribosome during protein synthesis, or as a result of ribosome stalling. Its function is as follows. Catalyzes the release of premature peptidyl moieties from peptidyl-tRNA molecules trapped in stalled 50S ribosomal subunits, and thus maintains levels of free tRNAs and 50S ribosomes. The polypeptide is Peptidyl-tRNA hydrolase (Aliivibrio salmonicida (strain LFI1238) (Vibrio salmonicida (strain LFI1238))).